The chain runs to 555 residues: MAPAIVMSNYEEEEIVRPVADFSPSLWGDHFHSFSVDNQVAEKYAQEIETLKEQTSTMLSAACGTTLTEKLNLIDIIERLGIAYHFEKQIEDMLDHIYRADPYFEAHEYNDLNTSSVQFRLLRQHGYNVSPNIFSRFQDANGKFKESLRSDIRGLLNLYEASHVRTHKEDILEEALVFSVGHLESAAPHLKSPLSKQVTHALEQSLHKSIPRVEIRYFISIYEEEEFKNDLLLRFAKLDYNLLQMLHKHELSEVSRWWKDLDFVTTLPYARDRAVECYFWTMGVYAEPQYSQARVMLAKTIAMISIVDDTFDAYGIVKELEVYTDAIQRWDISQIDRLPEYMKISYKALLDLYDDYEKELSKDGRSDVVHYAKERMKEIVGNYFIEGKWFIEGYMPSVSEYLSNALATSTYYLLTTTSYLGMKSATKEHFEWLATNPKILEANATLCRVVDDIATYEVEKGRGQIATGIECYMRDYGVSTEVAMEKFQEMADIAWKDVNEEILRPTPVSSEILTRILNLARIIDVTYKHNQDGYTHPEKVLKPHIIALVVDSIDI.

Mg(2+) contacts are provided by Asp308, Asp312, Asp451, Thr455, and Glu459. Residues 308-312 (DDTFD) carry the DDXXD motif motif.

Belongs to the terpene synthase family. Tpsa subfamily. The cofactor is Mg(2+).

The protein resides in the cytoplasm. The catalysed reaction is (2E,6E)-farnesyl diphosphate = (-)-vetispiradiene + diphosphate. Its pathway is secondary metabolite biosynthesis; terpenoid biosynthesis. Functionally, sesquiterpene synthase that catalyzes the formation of vetispiradiene from trans,trans-farnesyl diphosphate. The initial internal cyclization produces the monocyclic intermediate germacrene A. This chain is Vetispiradiene synthase 1, found in Hyoscyamus muticus (Egyptian henbane).